The sequence spans 484 residues: tRNA-2-methylthio-N(6)-dimethylallyladenosine synthase (484 aa).

The MTTase N-terminal domain maps to 36-153; it reads GKLYIKTHGC…LPELIRARRE (118 aa). Residues Cys-45, Cys-82, Cys-116, Cys-190, Cys-194, and Cys-197 each contribute to the [4Fe-4S] cluster site. The region spanning 176–415 is the Radical SAM core domain; it reads RAEGPSAFVS…HISAHAASIS (240 aa). The region spanning 416 to 479 is the TRAM domain; that stretch reads QSMVGSVQRV…SNSLRGRIQL (64 aa). The disordered stretch occupies residues 428 to 450; sequence EGPSRRDPNELTGKSENMRPVNF.

It belongs to the methylthiotransferase family. MiaB subfamily. In terms of assembly, monomer. [4Fe-4S] cluster serves as cofactor.

It is found in the cytoplasm. It catalyses the reaction N(6)-dimethylallyladenosine(37) in tRNA + (sulfur carrier)-SH + AH2 + 2 S-adenosyl-L-methionine = 2-methylsulfanyl-N(6)-dimethylallyladenosine(37) in tRNA + (sulfur carrier)-H + 5'-deoxyadenosine + L-methionine + A + S-adenosyl-L-homocysteine + 2 H(+). Catalyzes the methylthiolation of N6-(dimethylallyl)adenosine (i(6)A), leading to the formation of 2-methylthio-N6-(dimethylallyl)adenosine (ms(2)i(6)A) at position 37 in tRNAs that read codons beginning with uridine. The polypeptide is tRNA-2-methylthio-N(6)-dimethylallyladenosine synthase (Xanthomonas oryzae pv. oryzae (strain KACC10331 / KXO85)).